We begin with the raw amino-acid sequence, 346 residues long: DNA-directed RNA polymerases I and III subunit RPAC1 (346 aa).

Residue alanine 2 is modified to N-acetylalanine.

It belongs to the archaeal Rpo3/eukaryotic RPB3 RNA polymerase subunit family. Component of the RNA polymerase I and RNA polymerase III complexes consisting of at least 13 and 17 subunits, respectively. Pol I complex consists of a ten-subunit catalytic core composed of POLR1A/RPA1, POLR1B/RPA2, POLR1C/RPAC1, POLR1D/RPAC2, POLR1H/RPA12, POLR2E/RPABC1, POLR2F/RPABC2, POLR2H/RPABC3, POLR2K/RPABC4 and POLR2L/RPABC5; a mobile stalk subunit POLR1F/RPA43 protruding from the core and additional subunits homologous to general transcription factors POLR1E/RPA49 and POLR1G/RPA34. Part of Pol I pre-initiation complex (PIC), in which Pol I core assembles with RRN3 and promoter-bound UTBF and SL1/TIF-IB complex. Pol III complex consists of a ten-subunit catalytic core composed of POLR3A/RPC1, POLR3B/RPC2, POLR1C/RPAC1, POLR1D/RPAC2, POLR3K/RPC10, POLR2E/RPABC1, POLR2F/RPABC2, POLR2H/RPABC3, POLR2K/RPABC4 and POLR2L/RPABC5; a mobile stalk composed of two subunits POLR3H/RPC8 and CRCP/RPC9, protruding from the core and functioning primarily in transcription initiation; and additional subunits homologous to general transcription factors of the RNA polymerase II machinery, POLR3C/RPC3-POLR3F/RPC6-POLR3G/RPC7 heterotrimer required for transcription initiation and POLR3D/RPC4-POLR3E/RPC5 heterodimer involved in both transcription initiation and termination.

The protein localises to the nucleus. It is found in the cytoplasm. Its subcellular location is the cytosol. Functionally, DNA-dependent RNA polymerase catalyzes the transcription of DNA into RNA using the four ribonucleoside triphosphates as substrates. Common component of RNA polymerases I and III which synthesize ribosomal RNA precursors and short non-coding RNAs including 5S rRNA, snRNAs, tRNAs and miRNAs, respectively. POLR1C/RPAC1 is part of the polymerase core and may function as a clamp element that moves to open and close the cleft. This chain is DNA-directed RNA polymerases I and III subunit RPAC1 (POLR1C), found in Bos taurus (Bovine).